The chain runs to 280 residues: Ribosomal RNA small subunit methyltransferase A (280 aa).

Positions 30, 32, 57, 78, 108, and 125 each coordinate S-adenosyl-L-methionine.

It belongs to the class I-like SAM-binding methyltransferase superfamily. rRNA adenine N(6)-methyltransferase family. RsmA subfamily.

It is found in the cytoplasm. It catalyses the reaction adenosine(1518)/adenosine(1519) in 16S rRNA + 4 S-adenosyl-L-methionine = N(6)-dimethyladenosine(1518)/N(6)-dimethyladenosine(1519) in 16S rRNA + 4 S-adenosyl-L-homocysteine + 4 H(+). In terms of biological role, specifically dimethylates two adjacent adenosines (A1518 and A1519) in the loop of a conserved hairpin near the 3'-end of 16S rRNA in the 30S particle. May play a critical role in biogenesis of 30S subunits. The polypeptide is Ribosomal RNA small subunit methyltransferase A (Leifsonia xyli subsp. xyli (strain CTCB07)).